A 28-amino-acid polypeptide reads, in one-letter code: Trypsin inhibitor 2 (28 aa).

3 cysteine pairs are disulfide-bonded: Cys-3-Cys-20, Cys-10-Cys-22, and Cys-16-Cys-27.

Belongs to the protease inhibitor I7 (squash-type serine protease inhibitor) family.

The protein localises to the secreted. Functionally, inhibits trypsin. The polypeptide is Trypsin inhibitor 2 (Momordica charantia (Bitter gourd)).